We begin with the raw amino-acid sequence, 602 residues long: Elongation factor 4 (602 aa).

The tr-type G domain maps to 7–189 (DKIRNFSIVA…AIVTRLPPPK (183 aa)). GTP is bound by residues 19–24 (DHGKST) and 136–139 (NKVD).

This sequence belongs to the TRAFAC class translation factor GTPase superfamily. Classic translation factor GTPase family. LepA subfamily.

Its subcellular location is the cell inner membrane. It catalyses the reaction GTP + H2O = GDP + phosphate + H(+). Its function is as follows. Required for accurate and efficient protein synthesis under certain stress conditions. May act as a fidelity factor of the translation reaction, by catalyzing a one-codon backward translocation of tRNAs on improperly translocated ribosomes. Back-translocation proceeds from a post-translocation (POST) complex to a pre-translocation (PRE) complex, thus giving elongation factor G a second chance to translocate the tRNAs correctly. Binds to ribosomes in a GTP-dependent manner. This is Elongation factor 4 from Caulobacter vibrioides (strain NA1000 / CB15N) (Caulobacter crescentus).